Consider the following 625-residue polypeptide: Very-long-chain aldehyde decarbonylase CER1 (625 aa).

5 helical membrane-spanning segments follow: residues 45-65 (LGYF…QVWI), 126-146 (GVLM…YWLH), 177-197 (PFAE…TTLL), 200-220 (TASI…NNMG), and 329-349 (LLWP…RLFV). The Fatty acid hydroxylase domain maps to 138–272 (VEFLYYWLHK…MPLYDYIYGT (135 aa)).

Belongs to the sterol desaturase family. As to quaternary structure, homodimer. Interacts with CER3, CYTB5-B, CYTB5-C, CYTB5-D and CYTB5-E. In terms of tissue distribution, expressed in seedlings, stems, leaves, flowers, fruits and siliques. Not detected in roots, pollen and seeds. Expressed in trichomes, cotyledons, shoot apical meristem and leaf primordia. Preferentially associated with young leaves rather than mature leaves. Expressed in the epidermis of the stem and caulines leaves, in the carpels and the sepals.

Its subcellular location is the endoplasmic reticulum membrane. The enzyme catalyses a long-chain fatty aldehyde + 2 NADPH + O2 + H(+) = a long-chain alkane + formate + 2 NADP(+) + H2O. Its function is as follows. Aldehyde decarbonylase involved in the conversion of aldehydes to alkanes. Core component of a very-long-chain alkane synthesis complex. Involved in epicuticular wax biosynthesis and pollen fertility. In Arabidopsis thaliana (Mouse-ear cress), this protein is Very-long-chain aldehyde decarbonylase CER1 (CER1).